We begin with the raw amino-acid sequence, 208 residues long: Small ribosomal subunit protein uS4 (208 aa).

The region spanning 98 to 166 is the S4 RNA-binding domain; it reads SRLDNVVYRM…VKEAIEASRN (69 aa).

This sequence belongs to the universal ribosomal protein uS4 family. In terms of assembly, part of the 30S ribosomal subunit. Contacts protein S5. The interaction surface between S4 and S5 is involved in control of translational fidelity.

In terms of biological role, one of the primary rRNA binding proteins, it binds directly to 16S rRNA where it nucleates assembly of the body of the 30S subunit. With S5 and S12 plays an important role in translational accuracy. The polypeptide is Small ribosomal subunit protein uS4 (Kosmotoga olearia (strain ATCC BAA-1733 / DSM 21960 / TBF 19.5.1)).